Consider the following 66-residue polypeptide: Small ribosomal subunit protein eS27 (66 aa).

Zn(2+) is bound by residues Cys-21, Cys-24, Cys-40, and Cys-43. A C4-type zinc finger spans residues 21–43; the sequence is CPNCGNEQTIFSHATFPVRCLSC.

The protein belongs to the eukaryotic ribosomal protein eS27 family. Part of the 30S ribosomal subunit. The cofactor is Zn(2+).

The polypeptide is Small ribosomal subunit protein eS27 (Saccharolobus solfataricus (strain ATCC 35092 / DSM 1617 / JCM 11322 / P2) (Sulfolobus solfataricus)).